A 248-amino-acid chain; its full sequence is PF03932 family protein CutC (248 aa).

The protein belongs to the CutC family. In terms of assembly, homodimer.

It is found in the cytoplasm. This chain is PF03932 family protein CutC, found in Shigella dysenteriae serotype 1 (strain Sd197).